Consider the following 176-residue polypeptide: Macro domain-containing protein LMOf2365_2748 (176 aa).

Residues 1-175 (MEITVVKGDI…LYNKLINSEV (175 aa)) enclose the Macro domain.

This sequence belongs to the MacroD-type family.

In Listeria monocytogenes serotype 4b (strain F2365), this protein is Macro domain-containing protein LMOf2365_2748.